We begin with the raw amino-acid sequence, 239 residues long: Pyridoxine 5'-phosphate synthase (239 aa).

Residue Asn-7 participates in 3-amino-2-oxopropyl phosphate binding. 9 to 10 (DH) provides a ligand contact to 1-deoxy-D-xylulose 5-phosphate. A 3-amino-2-oxopropyl phosphate-binding site is contributed by Arg-18. His-43 (proton acceptor) is an active-site residue. The 1-deoxy-D-xylulose 5-phosphate site is built by Arg-45 and His-50. Residue Glu-70 is the Proton acceptor of the active site. Thr-100 is a binding site for 1-deoxy-D-xylulose 5-phosphate. His-191 acts as the Proton donor in catalysis. 3-amino-2-oxopropyl phosphate-binding positions include Gly-192 and 213–214 (GH).

It belongs to the PNP synthase family. As to quaternary structure, homooctamer; tetramer of dimers.

Its subcellular location is the cytoplasm. It catalyses the reaction 3-amino-2-oxopropyl phosphate + 1-deoxy-D-xylulose 5-phosphate = pyridoxine 5'-phosphate + phosphate + 2 H2O + H(+). It functions in the pathway cofactor biosynthesis; pyridoxine 5'-phosphate biosynthesis; pyridoxine 5'-phosphate from D-erythrose 4-phosphate: step 5/5. Functionally, catalyzes the complicated ring closure reaction between the two acyclic compounds 1-deoxy-D-xylulose-5-phosphate (DXP) and 3-amino-2-oxopropyl phosphate (1-amino-acetone-3-phosphate or AAP) to form pyridoxine 5'-phosphate (PNP) and inorganic phosphate. In Citrifermentans bemidjiense (strain ATCC BAA-1014 / DSM 16622 / JCM 12645 / Bem) (Geobacter bemidjiensis), this protein is Pyridoxine 5'-phosphate synthase.